A 98-amino-acid polypeptide reads, in one-letter code: Cell division topological specificity factor (98 aa).

It belongs to the MinE family.

Its function is as follows. Prevents the cell division inhibition by proteins MinC and MinD at internal division sites while permitting inhibition at polar sites. This ensures cell division at the proper site by restricting the formation of a division septum at the midpoint of the long axis of the cell. This is Cell division topological specificity factor from Methylorubrum populi (strain ATCC BAA-705 / NCIMB 13946 / BJ001) (Methylobacterium populi).